A 354-amino-acid polypeptide reads, in one-letter code: (R,R)-butanediol dehydrogenase (354 aa).

The Enoyl reductase (ER) domain maps to 10–350 (GDIRIEDIPE…NNESAVKIIV (341 aa)). Zn(2+)-binding residues include C37, H71, and E157.

Belongs to the zinc-containing alcohol dehydrogenase family. Zn(2+) serves as cofactor.

It carries out the reaction (R,R)-butane-2,3-diol + NAD(+) = (R)-acetoin + NADH + H(+). The catalysed reaction is (S)-acetoin + NAD(+) = diacetyl + NADH + H(+). Its function is as follows. NAD-dependent butanediol dehydrogenase which catalyzes the oxidation of (R,R)-butane-2,3-diol to (3R)-acetoin and of meso-butane-2,3-diol to (3S)-acetoin. Preferentially oxidizes (R,R)-butane-2,3-diol, with a catalytic efficiency approximately fourfold higher than with meso-butane-2,3-diol. Shows a very low activity with (S,S)-butane-2,3-diol. Can also catalyze the reduction of (3R/3S)-acetoin and diacetyl in the presence of NADH. This Neisseria gonorrhoeae (strain ATCC 700825 / FA 1090) protein is (R,R)-butanediol dehydrogenase.